The following is a 327-amino-acid chain: Phenylalanine--tRNA ligase alpha subunit (327 aa).

Position 252 (Glu252) interacts with Mg(2+).

It belongs to the class-II aminoacyl-tRNA synthetase family. Phe-tRNA synthetase alpha subunit type 1 subfamily. In terms of assembly, tetramer of two alpha and two beta subunits. It depends on Mg(2+) as a cofactor.

The protein localises to the cytoplasm. It catalyses the reaction tRNA(Phe) + L-phenylalanine + ATP = L-phenylalanyl-tRNA(Phe) + AMP + diphosphate + H(+). The polypeptide is Phenylalanine--tRNA ligase alpha subunit (Klebsiella pneumoniae (strain 342)).